A 426-amino-acid polypeptide reads, in one-letter code: Protein FAM124B (426 aa).

This sequence belongs to the FAM124 family.

Its subcellular location is the nucleus. The chain is Protein FAM124B (fam124b) from Xenopus tropicalis (Western clawed frog).